A 113-amino-acid chain; its full sequence is Tachykinin-4 (113 aa).

Positions 1–20 (MLPCLALLLLMELSVCTVAG) are cleaved as a signal peptide. At Met-67 the chain carries Methionine amide. A propeptide spanning residues 71–79 (VGGRPLIQP) is cleaved from the precursor. Leu-95 carries the post-translational modification Leucine amide. Residues 98–113 (RSLFTEGREDEAQGSE) constitute a propeptide that is removed on maturation.

Belongs to the tachykinin family. Expressed at low levels in the uterus of both pregnant and non-pregnant women. Isoform 1 is found only in the adrenal gland and fetal liver. Isoform 2 is found in heart, liver, bone marrow, prostate, adrenal gland and testis. Isoform 3 and isoform 4 are expressed predominantly in adrenal gland and placenta.

It is found in the secreted. Its function is as follows. Tachykinins are active peptides which excite neurons, evoke behavioral responses, are potent vasodilators and secretagogues, and contract (directly or indirectly) many smooth muscles. Endokinin-A induces thermal hyperalgesia and pain-related behavior such as scratching following intrathecal administration in rats. These effects are suppressed by treatment with endokinin-C. Endokinin-A/B reduces arterial blood pressure and increases sperm motility. The polypeptide is Tachykinin-4 (Homo sapiens (Human)).